The chain runs to 188 residues: Elongation factor P (188 aa).

Belongs to the elongation factor P family.

It localises to the cytoplasm. The protein operates within protein biosynthesis; polypeptide chain elongation. Functionally, involved in peptide bond synthesis. Stimulates efficient translation and peptide-bond synthesis on native or reconstituted 70S ribosomes in vitro. Probably functions indirectly by altering the affinity of the ribosome for aminoacyl-tRNA, thus increasing their reactivity as acceptors for peptidyl transferase. The chain is Elongation factor P from Mycoplasmoides gallisepticum (strain R(low / passage 15 / clone 2)) (Mycoplasma gallisepticum).